A 120-amino-acid polypeptide reads, in one-letter code: Fumarate reductase subunit D (120 aa).

A run of 3 helical transmembrane segments spans residues 25-45 (FAML…LGIL), 57-77 (GFVT…LPMW), and 100-120 (IACY…VFMI).

This sequence belongs to the FrdD family. As to quaternary structure, part of an enzyme complex containing four subunits: a flavoprotein (FrdA), an iron-sulfur protein (FrdB), and two hydrophobic anchor proteins (FrdC and FrdD).

The protein resides in the cell inner membrane. Its function is as follows. Anchors the catalytic components of the fumarate reductase complex to the cell membrane, binds quinones. The protein is Fumarate reductase subunit D of Photobacterium profundum (strain SS9).